Consider the following 399-residue polypeptide: MQKISKYSSMAILRKRPLVKTETGPESELLPEKRTKIKQEEVVPQPVDIDWVKSLPNKQYFEWIVVRNGNVPNRWATPLDPSILVTPASTKVPYKFQETYARMRVLRSKILAPVDIIGGSSIPVTVASKCGISKEQISPRDYRLQVLLGVMLSSQTKDEVTAMAMLNIMRYCIDELHSEEGMTLEAVLQINETKLDELIHSVGFHTRKAKYILSTCKILQDQFSSDVPATINELLGLPGVGPKMAYLTLQKAWGKIEGICVDVHVDRLTKLWKWVDAQKCKTPDQTRTQLQNWLPKGLWTEINGLLVGFGQIITKSRNLGDMLQFLPPDDPRSSLDWDLQSQLYKEIQQNIMSYPKWVKYLEGKRELNVEAEINVKHEEKTVEETMVKLENDISVKVED.

A mitochondrion-targeting transit peptide spans 1–26 (MQKISKYSSMAILRKRPLVKTETGPE). A Bipartite nuclear localization signal motif is present at residues 14–37 (RKRPLVKTETGPESELLPEKRTKI). A Glycyl lysine isopeptide (Lys-Gly) (interchain with G-Cter in SUMO) cross-link involves residue lysine 194. Residues 223-247 (FSSDVPATINELLGLPGVGPKMAYL) form the HhH domain. The Nucleophile; for N-glycosylase activity role is filled by lysine 243.

The protein belongs to the Nth/MutY family. Post-translationally, monosumoylated. Sumoylation is associated with targeting of NTG1 to nuclei containing oxidative DNA damage.

The protein localises to the nucleus. The protein resides in the mitochondrion. The enzyme catalyses 2'-deoxyribonucleotide-(2'-deoxyribose 5'-phosphate)-2'-deoxyribonucleotide-DNA = a 3'-end 2'-deoxyribonucleotide-(2,3-dehydro-2,3-deoxyribose 5'-phosphate)-DNA + a 5'-end 5'-phospho-2'-deoxyribonucleoside-DNA + H(+). Functionally, bifunctional DNA N-glycosylase with associated apurinic/apyrimidinic (AP) lyase function that catalyzes the first step in base excision repair (BER), the primary repair pathway for the repair of oxidative DNA damage. The DNA N-glycosylase activity releases the damaged DNA base from DNA by cleaving the N-glycosidic bond, leaving an AP site. The AP-lyase activity cleaves the phosphodiester bond 3' to the AP site by a beta-elimination. Primarily recognizes and repairs oxidative base damage of pyrimidines, but also purine-derived lesions, alkylation damage and cytosine photoproducts generated by UV irradiation as well as abasic sites. Also has 8-oxoguanine DNA glycosylase activity. The AP lyase can incise AP sites opposite all four bases. May also play a role in the regulation of mtDNA copy number by introducing a double-stranded break (DSB) at the mtDNA replication origin ori5, initiating the rolling-circle mtDNA replication. The polypeptide is Endonuclease III homolog 1 (Saccharomyces cerevisiae (strain ATCC 204508 / S288c) (Baker's yeast)).